The primary structure comprises 169 residues: MDDRLILMGVIGRPHGVRGAVHVTTYSPDPEGLAELPLRDERGRRVGLAWTGAGIARVTIGEGDEAAAIADRDAAAKLTNLRLYVRRADLPPPEDEDEFYFADLIGLHAVGPDGAALGTIRAVHDFGAGASIELSDGSLLPFTRAVVPEIDLPGGRAVVVRPVEVEMRE.

In terms of domain architecture, PRC barrel spans 96–166 (EDEFYFADLI…AVVVRPVEVE (71 aa)).

Belongs to the RimM family. In terms of assembly, binds ribosomal protein uS19.

It is found in the cytoplasm. Functionally, an accessory protein needed during the final step in the assembly of 30S ribosomal subunit, possibly for assembly of the head region. Essential for efficient processing of 16S rRNA. May be needed both before and after RbfA during the maturation of 16S rRNA. It has affinity for free ribosomal 30S subunits but not for 70S ribosomes. This is Ribosome maturation factor RimM from Acidiphilium cryptum (strain JF-5).